A 271-amino-acid chain; its full sequence is Thymidine kinase (271 aa).

Residues 74–81 (GPMFAGKT) and 152–155 (DEAQ) each bind ATP. Glutamate 153 (proton acceptor) is an active-site residue. Tyrosine 184 serves as a coordination point for substrate. The Zn(2+) site is built by cysteine 209 and cysteine 212. Tyrosine 237 contributes to the substrate binding site. Cysteine 241 contacts Zn(2+).

Belongs to the thymidine kinase family.

The enzyme catalyses thymidine + ATP = dTMP + ADP + H(+). The polypeptide is Thymidine kinase (TK) (Oryza sativa subsp. japonica (Rice)).